A 1255-amino-acid chain; its full sequence is MKGNRNPPPPPSGPVPPSPTSKNTAKYTNKDGSKFITVPKMNTPIDSAQPSPTASSLAAKPALPPGPETEPPQTVNRKKQKRRAKAAAKAAAERAQNSPAINGLPSPSPTNDQQSADADPEDDEDEPGTGHDSGNQSLYLNGGAHGGAPGKSKKSKKKKKKNATGPAGGFPNNNPYAQDDRDHSPEPILPPPPPQQNRPGMSREKIWNTNSQEERERIKEFWLGLSEAERKSLVKVEKDAVLKKMKEQQKHTCSCTVCGRKRTAIEEELEGLYDAYYEELEQYANHPNQGEGPPMLRPRRSFGSMGGMRPRGLHSRFSNHQPSRGRIVDELEGDEEEEEVEAEAEDDGEGDEEGEDVYSEDELEDDMYSEEEQEPSEELHRSDYAADFFNFGNSLTVQGRDRLPILPSFLQNYPFSGTGNNAYGSSSLGGILTVADDLLKNDGKKFIEMMEQLAERRMAREEDARGQFERAYDHPNGERYVHSHPPPPDEEEFEDEEEEYEEDDEEEYNSPDEEDTMTEEQRMEEGRRMFQIFAARMFEQRVLTAYREKVAKERQAKLLEEIEAENQQDAQRKAKKAKDAQRRKDRAAKKKEAQAEEKARREAEKAAEEAARRAEEARKAEEQRAKAEEKRKKKEAQRKAEEEERQRKEAERLRKIQDREEAERKAREAREREKKTREEARLREKEAREQKERKDRERREQQERERREKEAKAKAEREAKEAKEAKEAKEGKDTKERRKKEERAAHKAAALAPAIPVPITLPKRSATQQPPAPPVAPVPVLPQQSTSYASPKVPVATPALPKAPTPMRARQTSQQDGSTASSGAASNSGSMASQNPSPHPITPVHASPGLMAPPSKSGVMGIGSQGSAQPPSHSASPMSFPAKLLPPQHSPFGIPPMGSAMSYPPPGLSQMPLGFANPLHREPLFPPMPGFRPASGMMPMPPGLNGPGVNRGFPLHPPPGFLGGPMESPAPSMAQAMSPGLQRDNQSPHSRQGSGSFDPSQPISRPTPIGRPASVVQGQRPSNWSPSSGPPKPEPEAHLGSRALLDDLDDGPQDFPGRLSRGGSAPGPRPAPGFPMPPFGMDPMFSHNPWAPPGVVQPNLFGPHPPPSFSPLSAHTPMGMPWGHAMPSASTFGTPGAVDRPIEPRSVAVRKMLRRACEDLANAGSAEGRDSFIPLEMIKVQVENFNHGYPIDEKDLLDICETEGNEVNGGGSFDVVNDGQGGRSIRFVSGDQRTAPQPVQLAVGYNPGSPIGGGR.

Positions methionine 1–proline 19 are enriched in pro residues. Disordered stretches follow at residues methionine 1–glutamate 214, asparagine 285–leucine 379, arginine 470–glutamate 525, glutamate 563–glycine 898, and histidine 956–glycine 1080. The segment covering proline 50 to proline 61 has biased composition (low complexity). Over residues asparagine 76–alanine 86 the composition is skewed to basic residues. The span at alanine 87–glutamine 96 shows a compositional bias: low complexity. Residues alanine 118–proline 127 are compositionally biased toward acidic residues. Residues lysine 151–asparagine 162 show a composition bias toward basic residues. Residues proline 187–glutamine 196 are compositionally biased toward pro residues. The segment covering methionine 201–glutamate 214 has biased composition (basic and acidic residues). The span at glutamate 330 to serine 376 shows a compositional bias: acidic residues. Residues arginine 470 to valine 481 are compositionally biased toward basic and acidic residues. Positions proline 488–threonine 518 are enriched in acidic residues. Positions arginine 547–alanine 745 form a coiled coil. 2 stretches are compositionally biased toward basic and acidic residues: residues lysine 590–lysine 630 and glutamine 637–alanine 745. Over residues proline 770 to valine 780 the composition is skewed to pro residues. Residues glutamine 811–asparagine 835 show a composition bias toward low complexity. 2 stretches are compositionally biased toward polar residues: residues glutamine 865–proline 877 and arginine 983–serine 1004. Over residues glycine 1067–glycine 1080 the composition is skewed to pro residues.

This sequence belongs to the NST1 family.

Its subcellular location is the cytoplasm. Functionally, may act as a negative regulator of salt tolerance. The chain is Stress response protein NST1 (NST1) from Chaetomium globosum (strain ATCC 6205 / CBS 148.51 / DSM 1962 / NBRC 6347 / NRRL 1970) (Soil fungus).